The following is a 248-amino-acid chain: Triosephosphate isomerase (248 aa).

9 to 11 (NWK) contacts substrate. Histidine 94 acts as the Electrophile in catalysis. Glutamate 166 serves as the catalytic Proton acceptor. Substrate contacts are provided by residues glycine 172, serine 212, and 233-234 (GG).

Belongs to the triosephosphate isomerase family. As to quaternary structure, homodimer.

It is found in the cytoplasm. It carries out the reaction D-glyceraldehyde 3-phosphate = dihydroxyacetone phosphate. It participates in carbohydrate biosynthesis; gluconeogenesis. Its pathway is carbohydrate degradation; glycolysis; D-glyceraldehyde 3-phosphate from glycerone phosphate: step 1/1. In terms of biological role, involved in the gluconeogenesis. Catalyzes stereospecifically the conversion of dihydroxyacetone phosphate (DHAP) to D-glyceraldehyde-3-phosphate (G3P). The protein is Triosephosphate isomerase of Clostridium perfringens (strain ATCC 13124 / DSM 756 / JCM 1290 / NCIMB 6125 / NCTC 8237 / Type A).